Consider the following 74-residue polypeptide: U3-agatoxin-Ao1g (74 aa).

An N-terminal signal peptide occupies residues 1–20; that stretch reads MRAIISLLLISTMVFGVIEA. Residues 21–34 constitute a propeptide that is removed on maturation; that stretch reads VSVEEGLKIFEGER. 4 disulfides stabilise this stretch: Cys37-Cys53, Cys44-Cys58, Cys52-Cys68, and Cys60-Cys66. The residue at position 72 (Asn72) is an Asparagine amide.

This sequence belongs to the neurotoxin 07 (Beta/delta-agtx) family. 03 (aga-4) subfamily. Aga sub-subfamily. As to expression, expressed by the venom gland.

It is found in the secreted. In terms of biological role, insecticidal neurotoxin that modulates the insect Nav channel (DmNaV1/tipE (para/tipE)) in a unique manner, with both the activation and inactivation processes being affected. The voltage dependence of activation is shifted toward more hyperpolarized potentials (analogous to site 4 toxins) and a non-inactivating persistent sodium current is induced (site 3-like action). Interestingly, both effects take place in a voltage-dependent manner, producing a bell-shaped curve between -80 and 0 mV. This chain is U3-agatoxin-Ao1g, found in Agelena orientalis (Funnel-web spider).